The sequence spans 185 residues: MIENIKKDAQERMGKCVDATKNQMAKVRTGRAHPSLLDSIQVSYYGTMTPLNQVANVGVEDSRTLSVTVFDRSAIQAVEKAIMSSDLGLNPMSAGATLRIPLPALTEERRKDFIKVVRNEAENGRIAIRNVRRDAISEVKKLEKAKACTEDDVRRSEEEVQKFTDAHIKKIDEILAAKEIELMEV.

Belongs to the RRF family.

The protein resides in the cytoplasm. Functionally, responsible for the release of ribosomes from messenger RNA at the termination of protein biosynthesis. May increase the efficiency of translation by recycling ribosomes from one round of translation to another. This Shewanella baltica (strain OS223) protein is Ribosome-recycling factor.